Consider the following 322-residue polypeptide: UV DNA damage endonuclease (322 aa).

It belongs to the uve1/UvsE family.

Functionally, component in a DNA repair pathway. Removal of UV LIGHT damaged nucleotides. Recognizes pyrimidine dimers and cleave a phosphodiester bond immediately 5' to the lesion. The chain is UV DNA damage endonuclease from Nostoc sp. (strain PCC 7120 / SAG 25.82 / UTEX 2576).